A 458-amino-acid chain; its full sequence is Protein unc-93 homolog A (458 aa).

5 helical membrane-spanning segments follow: residues V8–L28, T42–I62, W69–N89, W90–A110, and I140–F160. N-linked (GlcNAc...) asparagine glycosylation is present at N190. 7 helical membrane passes run T202–L222, L258–L275, C286–L306, A321–W341, T345–W365, L390–T410, and L412–L432.

Belongs to the unc-93 family.

It is found in the cell membrane. The polypeptide is Protein unc-93 homolog A (Unc93a) (Mus musculus (Mouse)).